Consider the following 146-residue polypeptide: DNA utilization protein HofO (146 aa).

The helical transmembrane segment at 20-37 (WAFWLLMLVTLIFLSSTH) threads the bilayer.

The protein resides in the cell inner membrane. In terms of biological role, required for the use of extracellular DNA as a nutrient. This Escherichia coli (strain K12) protein is DNA utilization protein HofO (hofO).